The following is a 1116-amino-acid chain: Phosphatidylinositol 4-kinase beta 2 (1116 aa).

A PIK helical domain is found at 1–143 (MQMAQFLSLV…SRIQEKCQIA (143 aa)). 8 repeat units span residues 210–229 (ADDNKIFKRLIPSPKVRDAL), 242–261 (CEKDGFFKRLLRDSRGEDDE), 264–283 (SNSEGFFKRLLKDNKSEEEE), 286–304 (NNSEGFFKRLRSSKGDEEE), 307–326 (SSSDGFFKRLLRDNKGDEEE), 329–348 (ANSEGFFKKLLRDSKNEDEE), 351–370 (ANTEGFFKKLFHESKNEDDK), and 378–396 (EEKDGFLKKLFKEKFDEKR). An 11 X 20 AA approximate repeats (PPC) region spans residues 210 to 507 (ADDNKIFKRL…FRDRDRSVED (298 aa)). The span at 394 to 404 (EKRNGNERNET) shows a compositional bias: basic and acidic residues. A disordered region spans residues 394–417 (EKRNGNERNETDETVYTDETSGED). Residues 405 to 415 (DETVYTDETSG) are compositionally biased toward acidic residues. Repeat unit 9 spans residues 418 to 436 (NGREGFFKKLFKEKFEDKP). A phosphoserine mark is found at Ser447 and Ser452. 2 tandem repeats follow at residues 452–470 (SSEFSLFRRLFRRHPEDVK) and 488–507 (PGTENFFRKLFRDRDRSVED). 2 disordered regions span residues 515-540 (KYKEKCPGSPKPQNNTPSKKPPLPNN) and 794-813 (GEAPPGLPLKGAGQDSSDAQ). Residues 830 to 1101 (EFWEGKRLRI…LISSSLDAWR (272 aa)) enclose the PI3K/PI4K catalytic domain. The G-loop stretch occupies residues 836–842 (RLRIRKD). Residues 964-972 (QIKDRHNGN) form a catalytic loop region. The tract at residues 983–1007 (HIDFGFMLSNSPGGVNFESAPFKLT) is activation loop.

This sequence belongs to the PI3/PI4-kinase family. Type III PI4K subfamily.

It is found in the cell membrane. The protein localises to the golgi apparatus. It localises to the trans-Golgi network. The protein resides in the cytoplasmic vesicle membrane. The enzyme catalyses a 1,2-diacyl-sn-glycero-3-phospho-(1D-myo-inositol) + ATP = a 1,2-diacyl-sn-glycero-3-phospho-(1D-myo-inositol 4-phosphate) + ADP + H(+). Acts on phosphatidylinositol (PtdIns) in the first committed step in the production of the second messenger inositol-1,4,5-trisphosphate. Necessary for proper organization of the trans-Golgi network (TGN) and post-Golgi secretion in root hairs. Together with PI4KB1, required during polarized root hair expansion and pollen tube elongation. Functions redundantly with PI4KB1 upstream of the cold response phosphoinositide-dependent phospholipase C (PI-PLC) pathway. The polypeptide is Phosphatidylinositol 4-kinase beta 2 (PI4KB2) (Arabidopsis thaliana (Mouse-ear cress)).